The chain runs to 195 residues: Holliday junction branch migration complex subunit RuvA (195 aa).

The segment at 1–62 (MIEFVKGPVA…EDQQTLYGFR (62 aa)) is domain I. The domain II stretch occupies residues 63–141 (SRRERELFNK…ELAPDYVPNE (79 aa)). The flexible linker stretch occupies residues 141–145 (EGLFA). The tract at residues 146 to 195 (QGASELDEACEALVALGYSEREIAKVRKALSGEILTTDAYIKRALQLLLK) is domain III.

Belongs to the RuvA family. Homotetramer. Forms an RuvA(8)-RuvB(12)-Holliday junction (HJ) complex. HJ DNA is sandwiched between 2 RuvA tetramers; dsDNA enters through RuvA and exits via RuvB. An RuvB hexamer assembles on each DNA strand where it exits the tetramer. Each RuvB hexamer is contacted by two RuvA subunits (via domain III) on 2 adjacent RuvB subunits; this complex drives branch migration. In the full resolvosome a probable DNA-RuvA(4)-RuvB(12)-RuvC(2) complex forms which resolves the HJ.

The protein resides in the cytoplasm. Its function is as follows. The RuvA-RuvB-RuvC complex processes Holliday junction (HJ) DNA during genetic recombination and DNA repair, while the RuvA-RuvB complex plays an important role in the rescue of blocked DNA replication forks via replication fork reversal (RFR). RuvA specifically binds to HJ cruciform DNA, conferring on it an open structure. The RuvB hexamer acts as an ATP-dependent pump, pulling dsDNA into and through the RuvAB complex. HJ branch migration allows RuvC to scan DNA until it finds its consensus sequence, where it cleaves and resolves the cruciform DNA. The sequence is that of Holliday junction branch migration complex subunit RuvA from Exiguobacterium sp. (strain ATCC BAA-1283 / AT1b).